Consider the following 242-residue polypeptide: Small ribosomal subunit protein uS2 (242 aa).

It belongs to the universal ribosomal protein uS2 family.

In Vibrio parahaemolyticus serotype O3:K6 (strain RIMD 2210633), this protein is Small ribosomal subunit protein uS2.